Consider the following 127-residue polypeptide: Phosphoribosyl-AMP cyclohydrolase (127 aa).

Position 78 (D78) interacts with Mg(2+). Position 79 (C79) interacts with Zn(2+). D80 and D82 together coordinate Mg(2+). C95 and C102 together coordinate Zn(2+).

It belongs to the PRA-CH family. As to quaternary structure, homodimer. It depends on Mg(2+) as a cofactor. Requires Zn(2+) as cofactor.

Its subcellular location is the cytoplasm. The enzyme catalyses 1-(5-phospho-beta-D-ribosyl)-5'-AMP + H2O = 1-(5-phospho-beta-D-ribosyl)-5-[(5-phospho-beta-D-ribosylamino)methylideneamino]imidazole-4-carboxamide. Its pathway is amino-acid biosynthesis; L-histidine biosynthesis; L-histidine from 5-phospho-alpha-D-ribose 1-diphosphate: step 3/9. Its function is as follows. Catalyzes the hydrolysis of the adenine ring of phosphoribosyl-AMP. The chain is Phosphoribosyl-AMP cyclohydrolase from Salinibacter ruber (strain DSM 13855 / M31).